The following is a 152-amino-acid chain: Ribosome maturation factor RimP (152 aa).

This sequence belongs to the RimP family.

The protein resides in the cytoplasm. Functionally, required for maturation of 30S ribosomal subunits. This is Ribosome maturation factor RimP from Porphyromonas gingivalis (strain ATCC 33277 / DSM 20709 / CIP 103683 / JCM 12257 / NCTC 11834 / 2561).